The sequence spans 156 residues: MSRKHKAPIRTVLADPVFNMVVVTKLVNTIMLDGKKSIAQNIVYSAFDIIKEKTGREPYEVFQEALNNITPLLEIRTRRIGGSNYQVPTEVSKRRQQTLSLRWLTNYARLRNEKTMDLRLANEIIDASNKTGGAIKKREDTHKMAEANRAFAHFRW.

Belongs to the universal ribosomal protein uS7 family. As to quaternary structure, part of the 30S ribosomal subunit. Contacts proteins S9 and S11.

Functionally, one of the primary rRNA binding proteins, it binds directly to 16S rRNA where it nucleates assembly of the head domain of the 30S subunit. Is located at the subunit interface close to the decoding center, probably blocks exit of the E-site tRNA. The polypeptide is Small ribosomal subunit protein uS7 (Mycoplasmopsis pulmonis (strain UAB CTIP) (Mycoplasma pulmonis)).